Reading from the N-terminus, the 73-residue chain is Antitoxin VapB20 (73 aa).

Its function is as follows. Antitoxin component of a type II toxin-antitoxin (TA) system. Upon expression in E.coli neutralizes the toxic effect of cognate toxin VapC20. The chain is Antitoxin VapB20 (vapB20) from Mycobacterium tuberculosis (strain ATCC 25618 / H37Rv).